The chain runs to 458 residues: ATP synthase subunit beta (458 aa).

148–155 (GGAGVGKT) lines the ATP pocket.

This sequence belongs to the ATPase alpha/beta chains family. In terms of assembly, F-type ATPases have 2 components, CF(1) - the catalytic core - and CF(0) - the membrane proton channel. CF(1) has five subunits: alpha(3), beta(3), gamma(1), delta(1), epsilon(1). CF(0) has three main subunits: a(1), b(2) and c(9-12). The alpha and beta chains form an alternating ring which encloses part of the gamma chain. CF(1) is attached to CF(0) by a central stalk formed by the gamma and epsilon chains, while a peripheral stalk is formed by the delta and b chains.

Its subcellular location is the cell inner membrane. It carries out the reaction ATP + H2O + 4 H(+)(in) = ADP + phosphate + 5 H(+)(out). Its function is as follows. Produces ATP from ADP in the presence of a proton gradient across the membrane. The catalytic sites are hosted primarily by the beta subunits. In Alkalilimnicola ehrlichii (strain ATCC BAA-1101 / DSM 17681 / MLHE-1), this protein is ATP synthase subunit beta.